Reading from the N-terminus, the 103-residue chain is uncharacterized protein (103 aa).

Residues 38-51 (TTTTSSTTSASTTS) are compositionally biased toward low complexity. The disordered stretch occupies residues 38 to 70 (TTTTSSTTSASTTSQPSFSLPTSCNSNSPQSNL). Over residues 52 to 70 (QPSFSLPTSCNSNSPQSNL) the composition is skewed to polar residues.

This is an uncharacterized protein from Dictyostelium discoideum (Social amoeba).